A 182-amino-acid chain; its full sequence is Keratin, type II cytoskeletal 68 kDa, component IA (182 aa).

The region spanning 1–66 (DAEQHGEVAL…TLLEGEECRM (66 aa)) is the IF rod domain. The segment at 1–66 (DAEQHGEVAL…TLLEGEECRM (66 aa)) is coil 2B. An H2 subdomain region spans residues 67 to 86 (SGECQSSVSIEMVHNTTSSS). Residues 67 to 182 (SGECQSSVSI…SQSQRSHHKL (116 aa)) form a tail region. Residues 87–162 (SGGSGALGGG…GSCAVSGVGG (76 aa)) are V2 subdomain. Positions 104-124 (GSGGLGSGSLGSGRLGSGGRG) are enriched in gly residues. The disordered stretch occupies residues 104–182 (GSGGLGSGSL…SQSQRSHHKL (79 aa)). Composition is skewed to low complexity over residues 144–158 (VRGS…CAVS) and 165–176 (SVRVTQSSSQSQ). Residues 163 to 182 (RGSVRVTQSSSQSQRSHHKL) form an E2 subdomain region.

This sequence belongs to the intermediate filament family. In terms of assembly, heterotetramer of two type I and two type II keratins.

The sequence is that of Keratin, type II cytoskeletal 68 kDa, component IA from Bos taurus (Bovine).